We begin with the raw amino-acid sequence, 355 residues long: Aminopeptidase N (355 aa).

Substrate is bound by residues E156 and 290 to 294 (GAMEN). H326 contributes to the Zn(2+) binding site. E327 functions as the Proton acceptor in the catalytic mechanism. Residues H330 and E349 each coordinate Zn(2+). E349 serves as a coordination point for substrate.

This sequence belongs to the peptidase M1 family. Zn(2+) is required as a cofactor.

Its subcellular location is the cytoplasm. It carries out the reaction Release of an N-terminal amino acid, Xaa-|-Yaa- from a peptide, amide or arylamide. Xaa is preferably Ala, but may be most amino acids including Pro (slow action). When a terminal hydrophobic residue is followed by a prolyl residue, the two may be released as an intact Xaa-Pro dipeptide.. In terms of biological role, aminopeptidase N is involved in the degradation of intracellular peptides generated by protein breakdown during normal growth as well as in response to nutrient starvation. The sequence is that of Aminopeptidase N (pepN) from Acetobacter pasteurianus (Acetobacter turbidans).